The chain runs to 511 residues: Vicilin-like seed storage protein At2g28490 (511 aa).

The N-terminal stretch at 1 to 27 is a signal peptide; sequence MEKNKRAIGFLLLVVLINGVMMTRSNG. A disordered region spans residues 54-81; that stretch reads GGGGGGAWGGEGEGGGEWGGGGEGGGGG. 2 Cupin type-1 domains span residues 86 to 238 and 329 to 480; these read FMMR…PELQ and YNIY…ETMR. Residues asparagine 231, asparagine 369, asparagine 403, and asparagine 464 are each glycosylated (N-linked (GlcNAc...) asparagine).

It belongs to the 7S seed storage protein family.

Seed storage protein. In Arabidopsis thaliana (Mouse-ear cress), this protein is Vicilin-like seed storage protein At2g28490.